We begin with the raw amino-acid sequence, 236 residues long: Small ribosomal subunit protein uS2c (236 aa).

Belongs to the universal ribosomal protein uS2 family.

It localises to the plastid. It is found in the chloroplast. This is Small ribosomal subunit protein uS2c (rps2) from Citrus sinensis (Sweet orange).